The chain runs to 236 residues: Rho-related GTP-binding protein RhoV (236 aa).

The segment at 1-27 (MPPRELSEAEPPPLRAPTPPPRRRSAP) is disordered. Residues 10 to 20 (EPPPLRAPTPP) show a composition bias toward pro residues. Phosphoserine is present on S25. Residues 38–45 (GDGAVGKS), 85–89 (DTAGQ), and 143–146 (TQAD) contribute to the GTP site. Residue C234 is the site of S-palmitoyl cysteine attachment.

The protein belongs to the small GTPase superfamily. Rho family. Interacts with PAK2. Mg(2+) is required as a cofactor. Highly expressed in pancreas, placenta, and fetal brain.

It localises to the cell membrane. Its subcellular location is the endosome membrane. In terms of biological role, plays a role in the control of the actin cytoskeleton via activation of the JNK pathway. In Homo sapiens (Human), this protein is Rho-related GTP-binding protein RhoV.